A 421-amino-acid chain; its full sequence is D-amino acid dehydrogenase (421 aa).

FAD is bound at residue 3–17; the sequence is ILILGSGVVGTASAY.

Belongs to the DadA oxidoreductase family. FAD is required as a cofactor.

The catalysed reaction is a D-alpha-amino acid + A + H2O = a 2-oxocarboxylate + AH2 + NH4(+). It participates in amino-acid degradation; D-alanine degradation; NH(3) and pyruvate from D-alanine: step 1/1. Its function is as follows. Oxidative deamination of D-amino acids. This Xanthobacter autotrophicus (strain ATCC BAA-1158 / Py2) protein is D-amino acid dehydrogenase.